The sequence spans 65 residues: Large ribosomal subunit protein bL35 (65 aa).

Over residues 1–11 (MPKIKTRRSAA) the composition is skewed to basic residues. 2 disordered regions span residues 1–24 (MPKI…KFKR) and 41–65 (RMRL…MPYA).

Belongs to the bacterial ribosomal protein bL35 family.

The polypeptide is Large ribosomal subunit protein bL35 (Nitratidesulfovibrio vulgaris (strain DSM 19637 / Miyazaki F) (Desulfovibrio vulgaris)).